The sequence spans 1884 residues: Fatty acid synthase subunit alpha (1884 aa).

Residues 91–141 (TPDPAEPPAAEEPKAETGKESAPAASAAAAAATQPAAAVAPPPQSAGPVES) are disordered. The span at 111–129 (SAPAASAAAAAATQPAAAV) shows a compositional bias: low complexity. The Carrier domain occupies 147-222 (VKASLLIHVL…EQFQDTFSGS (76 aa)). O-(pantetheine 4'-phosphoryl)serine is present on Ser182. The interval 583-613 (TEQTTQDALAIPTGSNTPTEEDELSTASDDD) is disordered. Positions 584 to 600 (EQTTQDALAIPTGSNTP) are enriched in polar residues. Positions 601 to 613 (TEEDELSTASDDD) are enriched in acidic residues. The beta-ketoacyl reductase stretch occupies residues 677-873 (DKYVLVTGAG…CGAIIGWTRG (197 aa)). A Ketosynthase family 3 (KS3) domain is found at 1120-1660 (IQEVVIQHDL…QKGAQAVVVH (541 aa)). Catalysis depends on for beta-ketoacyl synthase activity residues Cys1303, His1545, and His1586. 3 residues coordinate Mg(2+): Asp1770, Val1771, and Glu1772. Residues 1770-1772 (DVE), Tyr1796, Ser1806, 1815-1825 (EATFKALGVSS), 1839-1842 (RDGN), and 1869-1871 (ISH) each bind acetyl-CoA. Ser1870 and His1871 together coordinate Mg(2+).

Belongs to the thiolase-like superfamily. Fungal fatty acid synthetase subunit alpha family. As to quaternary structure, fatty acid synthase is composed of alpha and beta subunits.

It carries out the reaction acetyl-CoA + n malonyl-CoA + 2n NADPH + 4n H(+) = a long-chain-acyl-CoA + n CoA + n CO2 + 2n NADP(+).. The catalysed reaction is a fatty acyl-[ACP] + malonyl-[ACP] + H(+) = a 3-oxoacyl-[ACP] + holo-[ACP] + CO2. It catalyses the reaction a (3R)-hydroxyacyl-[ACP] + NADP(+) = a 3-oxoacyl-[ACP] + NADPH + H(+). Functionally, fatty acid synthetase catalyzes the formation of long-chain fatty acids from acetyl-CoA, malonyl-CoA and NADPH. The alpha subunit contains domains for: acyl carrier protein, 3-oxoacyl-[acyl-carrier-protein] reductase, and 3-oxoacyl-[acyl-carrier-protein] synthase. This chain is Fatty acid synthase subunit alpha (FAS2), found in Candida parapsilosis (strain CDC 317 / ATCC MYA-4646) (Yeast).